The sequence spans 210 residues: Putative odorant-binding protein A5 (210 aa).

The N-terminal stretch at 1 to 19 (MKLPALHLLFLGFICLARS) is a signal peptide.

Belongs to the phosphatidylethanolamine-binding protein family. In terms of tissue distribution, cells at the bases of a few scattered sensilla on the posterior surface of the antenna.

The protein resides in the secreted. The chain is Putative odorant-binding protein A5 (a5) from Drosophila melanogaster (Fruit fly).